A 159-amino-acid chain; its full sequence is Ribosomal RNA large subunit methyltransferase H (159 aa).

Residues L76 and G108 each coordinate S-adenosyl-L-methionine.

Belongs to the RNA methyltransferase RlmH family. In terms of assembly, homodimer.

The protein localises to the cytoplasm. The catalysed reaction is pseudouridine(1915) in 23S rRNA + S-adenosyl-L-methionine = N(3)-methylpseudouridine(1915) in 23S rRNA + S-adenosyl-L-homocysteine + H(+). Its function is as follows. Specifically methylates the pseudouridine at position 1915 (m3Psi1915) in 23S rRNA. This is Ribosomal RNA large subunit methyltransferase H from Levilactobacillus brevis (strain ATCC 367 / BCRC 12310 / CIP 105137 / JCM 1170 / LMG 11437 / NCIMB 947 / NCTC 947) (Lactobacillus brevis).